The chain runs to 456 residues: RuvB-like helicase 1 (456 aa).

ATP is bound at residue 70–77 (GPPGTGKT).

It belongs to the RuvB family. In terms of assembly, forms homohexameric rings. May form a dodecamer with rept made of two stacked hexameric rings. Component of the chromatin remodeling Ino80 complex. Interacts with Myc and rept. Higher expression occurs in primordia of mesoderm, anterior and posterior midgut and cephalic furrow early in gastrulation, as well as in endoderm and mesoderm lineages during germ band extension. Later in development expression is only maintained in endoderm cells. Expressed in thoracic and abdominal segment neural precursors of all embryonic chordotonal organs.

Its subcellular location is the nucleus. The enzyme catalyses ATP + H2O = ADP + phosphate + H(+). Acts as a transcriptional coactivator in Wg signaling caused by altered arm signaling. Pont and rept interfere antagonistically with nuclear arm signaling function, and are required to enhance or reduce arm activity, respectively. Also an essential cofactor for the normal function of Myc; required for cellular proliferation and growth. Functionally, proposed core component of the chromatin remodeling Ino80 complex which is involved in transcriptional regulation, DNA replication and probably DNA repair. This chain is RuvB-like helicase 1, found in Drosophila melanogaster (Fruit fly).